The chain runs to 217 residues: MVVIGEKFPEVEVTTTHGKLKLPEHYIESGKWFVLFSHPGDFTPVCTTEFVAFQKRYDQFRELNTELIGLSIDQVFSHIKWVEWIKEKLDVDIEFPIIADDRGELAVKLGMISPYKGNNTVRAVFVVDATGTIRAIIYYPQEVGRNMDEIVRLVKALQTADKGYATPANWPNNDFLNEKVIVPPANNMDARKKRLEACKSGELEGYDWWFCYTDLKE.

The Thioredoxin domain maps to 2–159; it reads VVIGEKFPEV…IVRLVKALQT (158 aa). Residue Cys46 is the Cysteine sulfenic acid (-SOH) intermediate of the active site. Residue Arg122 participates in substrate binding.

Belongs to the peroxiredoxin family. Prx6 subfamily. In terms of assembly, homodecamer. Pentamer of dimers that assemble into a ring structure.

It is found in the cytoplasm. It carries out the reaction a hydroperoxide + [thioredoxin]-dithiol = an alcohol + [thioredoxin]-disulfide + H2O. Its function is as follows. Thiol-specific peroxidase that catalyzes the reduction of hydrogen peroxide and organic hydroperoxides to water and alcohols, respectively. Plays a role in cell protection against oxidative stress by detoxifying peroxides. The sequence is that of Peroxiredoxin from Methanococcus maripaludis (strain DSM 14266 / JCM 13030 / NBRC 101832 / S2 / LL).